The following is a 278-amino-acid chain: HTH-type transcriptional activator RhaS (278 aa).

The 99-residue stretch at 174–272 (NQLMAWLEDH…SWSPREIRQG (99 aa)) folds into the HTH araC/xylS-type domain. 2 consecutive DNA-binding regions (H-T-H motif) follow at residues 191–212 (ETVA…KQHT) and 239–262 (VTDI…RREF).

Binds DNA as a dimer.

Its subcellular location is the cytoplasm. Functionally, activates expression of the rhaBAD and rhaT operons. The polypeptide is HTH-type transcriptional activator RhaS (Enterobacter sp. (strain 638)).